We begin with the raw amino-acid sequence, 123 residues long: Putative outer membrane protein CPn_0818/CP_1053/CPj0818/CpB0847 (123 aa).

An N-terminal signal peptide occupies residues 1-30; it reads MKRQKRKQSITLIEMMVVITLIGIIGGALA.

It localises to the cell outer membrane. The protein is Putative outer membrane protein CPn_0818/CP_1053/CPj0818/CpB0847 of Chlamydia pneumoniae (Chlamydophila pneumoniae).